The chain runs to 225 residues: GTP-binding nuclear protein Ran (225 aa).

In terms of domain architecture, Small GTPase Ran-type spans 8-172 (VVAEFKLVLV…LWILRKLTGD (165 aa)). 19–26 (DGGVGKTT) contacts GTP. The interval 38 to 46 (KRYIATQGV) is switch-I. Residues glycine 69, 123 to 126 (NKVD), and 151 to 153 (SAK) contribute to the GTP site. The segment at 69–85 (GQEKLGGLREGYYIGAN) is switch-II.

Belongs to the small GTPase superfamily. Ran family. As to quaternary structure, monomer. Found in a nuclear export complex with RanGTP, exportin and pre-miRNA.

The protein resides in the nucleus. Its function is as follows. GTP-binding protein involved in nucleocytoplasmic transport. Required for the import of protein into the nucleus and also for RNA export. Involved in chromatin condensation and control of cell cycle. The chain is GTP-binding nuclear protein Ran from Tetrahymena thermophila.